The sequence spans 471 residues: 7-dehydrocholesterol reductase (471 aa).

Residues M1–G23 are disordered. Position 14 is a phosphoserine (S14). Transmembrane regions (helical) follow at residues L36–A56, L95–H115, L144–F164, W173–I193, L233–A253, V262–W282, L302–V322, and Q327–F347. NADP(+)-binding positions include K354, R358, L391, W396, and N403 to Y404. A helical membrane pass occupies residues L416 to L436. NADP(+) contacts are provided by residues D443, C447–Y451, and Y458.

This sequence belongs to the ERG4/ERG24 family. In terms of assembly, interacts with DHCR24; this interaction regulates DHCR7 activity. Interacts with TMEM147.

Its subcellular location is the endoplasmic reticulum membrane. It carries out the reaction cholesterol + NADP(+) = 7-dehydrocholesterol + NADPH + H(+). The enzyme catalyses 7-dehydrodesmosterol + NADPH + H(+) = desmosterol + NADP(+). The catalysed reaction is 5,6alpha-epoxy-5alpha-cholestan-3beta-ol + H2O = 5alpha-cholestane-3beta,5,6beta-triol. It catalyses the reaction 5,6beta-epoxy-5beta-cholestan-3beta-ol + H2O = 5alpha-cholestane-3beta,5,6beta-triol. It functions in the pathway steroid biosynthesis; cholesterol biosynthesis. Oxidoreductase that catalyzes the last step of the cholesterol synthesis pathway, which transforms cholesta-5,7-dien-3beta-ol (7-dehydrocholesterol,7-DHC) into cholesterol by reducing the C7-C8 double bond of its sterol core. Can also metabolize cholesta-5,7,24-trien-3beta-ol (7-dehydrodemosterol, 7-DHD) to desmosterol, which is then metabolized by the Delta(24)-sterol reductase (DHCR24) to cholesterol. Modulates ferroptosis (a form of regulated cell death driven by iron-dependent lipid peroxidation) through the metabolic breakdown of the anti-ferroptotic metabolites 7-DHC and 7-DHD which, when accumulated, divert the propagation of peroxyl radical-mediated damage from phospholipid components to its sterol core, protecting plasma and mitochondrial membranes from phospholipid autoxidation. Its function is as follows. Component of the microsomal antiestrogen binding site (AEBS), a multiproteic complex at the ER membrane that consists of an association between cholestenol Delta-isomerase/EBP and DHCR7. This complex is responsible for cholesterol-5,6-epoxide hydrolase (ChEH) activity, which consists in the hydration of cholesterol-5,6-epoxides (5,6-EC) into cholestane-3beta,5alpha,6beta-triol (CT). The precise role of each component of this complex has not been described yet. The protein is 7-dehydrocholesterol reductase (Dhcr7) of Mus musculus (Mouse).